A 360-amino-acid polypeptide reads, in one-letter code: MKWKKSLTGLSSYKPGKREEEVMAELGLTKITKLSSNENPLGTSPKVAELQADSSVETEIYPDGWASSLRTVVADFYQLEEEELIFTAGVDELIELLTRVLLDTTKNTVMATPTFVQYRQNALIEGAEVREIPLLVDGAHDLDGMLNAIDDNTTIVWVCNPNNPTGNYIDLADIQAFLDKVPSDVLVVLDEAYIEYVTPQPEKHEKLIRTYKNLIITRTFSKIYGLASARVGYGIADKAIIEQLNIVRPPFNTTSIGQKLAIEAIKDQAFIEACRTSNANGIKQYEAFAKRFEQVKLYPANGNFVLIDLGIEAGTIFSYLEKNGYITRSGAALGFPTAVRITIGKEEENSAVIALLEKLL.

Residue lysine 222 is modified to N6-(pyridoxal phosphate)lysine.

The protein belongs to the class-II pyridoxal-phosphate-dependent aminotransferase family. Histidinol-phosphate aminotransferase subfamily. In terms of assembly, homodimer. Requires pyridoxal 5'-phosphate as cofactor.

It carries out the reaction L-histidinol phosphate + 2-oxoglutarate = 3-(imidazol-4-yl)-2-oxopropyl phosphate + L-glutamate. The protein operates within amino-acid biosynthesis; L-histidine biosynthesis; L-histidine from 5-phospho-alpha-D-ribose 1-diphosphate: step 7/9. The sequence is that of Histidinol-phosphate aminotransferase from Listeria monocytogenes serotype 4b (strain CLIP80459).